Reading from the N-terminus, the 159-residue chain is Ribosomal RNA large subunit methyltransferase H (159 aa).

S-adenosyl-L-methionine is bound by residues Leu-76, Gly-108, and 127–132; that span reads FGRLTL.

It belongs to the RNA methyltransferase RlmH family. In terms of assembly, homodimer.

It is found in the cytoplasm. The catalysed reaction is pseudouridine(1915) in 23S rRNA + S-adenosyl-L-methionine = N(3)-methylpseudouridine(1915) in 23S rRNA + S-adenosyl-L-homocysteine + H(+). Specifically methylates the pseudouridine at position 1915 (m3Psi1915) in 23S rRNA. This Listeria monocytogenes serotype 4a (strain HCC23) protein is Ribosomal RNA large subunit methyltransferase H.